We begin with the raw amino-acid sequence, 926 residues long: Alpha-aminoadipic semialdehyde synthase, mitochondrial (926 aa).

The N-terminal 27 residues, 1-27, are a transit peptide targeting the mitochondrion; the sequence is MLRAQRLRLARLRACVSRGLHHKPVMA. The segment at 28 to 455 is lysine-ketoglutarate reductase; that stretch reads LRREDVNAWE…DAVITSNGLL (428 aa). N6-acetyllysine is present on residues K48, K52, and K56. An N6-acetyllysine; alternate modification is found at K93. An N6-succinyllysine; alternate modification is found at K93. Position 128 is an N6-acetyllysine (K128). Position 138 is an N6-acetyllysine; alternate (K138). Position 138 is an N6-succinyllysine; alternate (K138). K274 bears the N6-succinyllysine mark. Residue K286 is modified to N6-acetyllysine; alternate. K286 is modified (N6-succinyllysine; alternate). K333 is modified (N6-succinyllysine). Position 458 is an N6-acetyllysine; alternate (K458). K458 bears the N6-succinyllysine; alternate mark. Positions 477–926 are saccharopine dehydrogenase; sequence MSTKKKVLVL…VFNTQSTIKL (450 aa). The NAD(+) site is built by S488, D512, and Q516. 2 positions are modified to N6-acetyllysine; alternate: K523 and K535. N6-succinyllysine; alternate is present on residues K523 and K535. 3 residues coordinate NAD(+): L554, A576, and S577. 577–578 contacts L-saccharopine; the sequence is SY. K584 is subject to N6-acetyllysine; alternate. K584 is modified (N6-succinyllysine; alternate). NAD(+) contacts are provided by L603, D604, and P605. D604 is an L-saccharopine binding site. R703 contributes to the L-saccharopine binding site. Position 707 is an N6-acetyllysine (K707). Residue 724-726 coordinates L-saccharopine; that stretch reads TLR. Residue K732 is modified to N6-succinyllysine. An N6-acetyllysine modification is found at K739. At K761 the chain carries N6-acetyllysine; alternate. Position 761 is an N6-succinyllysine; alternate (K761). N6-acetyllysine is present on residues K778 and K780.

It in the N-terminal section; belongs to the AlaDH/PNT family. This sequence in the C-terminal section; belongs to the saccharopine dehydrogenase family. Homotetramer.

Its subcellular location is the mitochondrion. The catalysed reaction is L-saccharopine + NADP(+) + H2O = L-lysine + 2-oxoglutarate + NADPH + H(+). It carries out the reaction L-saccharopine + NAD(+) + H2O = (S)-2-amino-6-oxohexanoate + L-glutamate + NADH + H(+). Its pathway is amino-acid degradation; L-lysine degradation via saccharopine pathway; glutaryl-CoA from L-lysine: step 1/6. The protein operates within amino-acid degradation; L-lysine degradation via saccharopine pathway; glutaryl-CoA from L-lysine: step 2/6. Bifunctional enzyme that catalyzes the first two steps in lysine degradation. The protein is Alpha-aminoadipic semialdehyde synthase, mitochondrial of Rattus norvegicus (Rat).